A 340-amino-acid polypeptide reads, in one-letter code: Guanine nucleotide-binding protein subunit beta-4 (340 aa).

Serine 2 is subject to N-acetylserine. Phosphoserine is present on serine 2. 5 WD repeats span residues glycine 53–alanine 92, leucine 95–arginine 134, glycine 141–threonine 179, glycine 182–serine 221, and glycine 224–leucine 263. Residue histidine 266 is modified to Phosphohistidine. WD repeat units lie at residues asparagine 268 to valine 307 and glycine 310 to tryptophan 339.

Belongs to the WD repeat G protein beta family. In terms of assembly, g proteins are composed of 3 units, alpha, beta and gamma. Strongly expressed in lung and placenta, whereas it is weakly expressed in brain and heart. Abundantly expressed in the axons and Schwann cells of peripheral nerves.

Functionally, guanine nucleotide-binding proteins (G proteins) are involved as a modulator or transducer in various transmembrane signaling systems. The beta and gamma chains are required for the GTPase activity, for replacement of GDP by GTP, and for G protein-effector interaction. The protein is Guanine nucleotide-binding protein subunit beta-4 (GNB4) of Homo sapiens (Human).